The sequence spans 356 residues: S-adenosylmethionine:tRNA ribosyltransferase-isomerase (356 aa).

The protein belongs to the QueA family. Monomer.

The protein localises to the cytoplasm. It carries out the reaction 7-aminomethyl-7-carbaguanosine(34) in tRNA + S-adenosyl-L-methionine = epoxyqueuosine(34) in tRNA + adenine + L-methionine + 2 H(+). Its pathway is tRNA modification; tRNA-queuosine biosynthesis. In terms of biological role, transfers and isomerizes the ribose moiety from AdoMet to the 7-aminomethyl group of 7-deazaguanine (preQ1-tRNA) to give epoxyqueuosine (oQ-tRNA). This is S-adenosylmethionine:tRNA ribosyltransferase-isomerase from Xanthomonas oryzae pv. oryzae (strain KACC10331 / KXO85).